Reading from the N-terminus, the 222-residue chain is Proteoglycan 3 (222 aa).

Positions 1–17 are cleaved as a signal peptide; that stretch reads MKQPLILSFLLLGMVSA. The segment covering 27–46 has biased composition (basic and acidic residues); it reads NPKREESLKQEADGSREQGR. The tract at residues 27-100 is disordered; the sequence is NPKREESLKQ…PKEEDTTHFQ (74 aa). Acidic residues predominate over residues 71-81; the sequence is FEDEEAMESDP. Over residues 83 to 97 the composition is skewed to basic and acidic residues; sequence ALNKDSACPKEEDTT. The C-type lectin domain maps to 105 to 221; the sequence is CKSCNYVLVR…CKSHLPFICS (117 aa). Cystine bridges form between cysteine 126–cysteine 220 and cysteine 197–cysteine 212.

In terms of tissue distribution, expressed in bone marrow, spleen, and thymus. Not detected in heart, liver or lung.

Its function is as follows. Possesses similar cytotoxic and cytostimulatory activities to PRG2/MBP. This chain is Proteoglycan 3, found in Mus musculus (Mouse).